Here is a 427-residue protein sequence, read N- to C-terminus: MGMTTAQKIFSAHLVDEPFAGTKVLSIDVVMCHEITTPIAIADLMARGKDRVFDPTKIKAVIDHVTPSKDSKTATQAKMLRDWARRHDIKDFFDIGANGVCHALFPEKGFIRPGNTVIMGDSHTCTHGAFGAFAAGVGTTDLEVGILKGVCAFREPKTIRVNLNGTLPKGVFAKDAILRVIGHLGVNGATDRVIEFGGPVVAQMTMESRMTLCNMAIEAGGTSGICMPDQVTVDYLWPFISGSFGSKEEALAAYSVWCSDADAAYEQVIDLDLSDLAPLCTFGYKPDQVKSVTEMAGTQVDQVYLGSCTNGRLEDLRVAAQILKGKKIASHVRAILSPATPQIYKDAVAEGLIQIFMDAGFCVTNPTCGACLGMSNGVLAEGEVCASTTNRNFMGRMGKGGMVHLLSPATAAASAIEGKIADPRNYL.

[4Fe-4S] cluster-binding residues include C308, C368, and C371.

This sequence belongs to the aconitase/IPM isomerase family. LeuC type 2 subfamily. In terms of assembly, heterodimer of LeuC and LeuD. [4Fe-4S] cluster serves as cofactor.

The catalysed reaction is (2R,3S)-3-isopropylmalate = (2S)-2-isopropylmalate. Its pathway is amino-acid biosynthesis; L-leucine biosynthesis; L-leucine from 3-methyl-2-oxobutanoate: step 2/4. Catalyzes the isomerization between 2-isopropylmalate and 3-isopropylmalate, via the formation of 2-isopropylmaleate. The sequence is that of 3-isopropylmalate dehydratase large subunit from Citrifermentans bemidjiense (strain ATCC BAA-1014 / DSM 16622 / JCM 12645 / Bem) (Geobacter bemidjiensis).